Reading from the N-terminus, the 217-residue chain is Probable transaldolase (217 aa).

The active-site Schiff-base intermediate with substrate is the lysine 83.

This sequence belongs to the transaldolase family. Type 3B subfamily.

Its subcellular location is the cytoplasm. It carries out the reaction D-sedoheptulose 7-phosphate + D-glyceraldehyde 3-phosphate = D-erythrose 4-phosphate + beta-D-fructose 6-phosphate. Its pathway is carbohydrate degradation; pentose phosphate pathway; D-glyceraldehyde 3-phosphate and beta-D-fructose 6-phosphate from D-ribose 5-phosphate and D-xylulose 5-phosphate (non-oxidative stage): step 2/3. Its function is as follows. Transaldolase is important for the balance of metabolites in the pentose-phosphate pathway. This Novosphingobium aromaticivorans (strain ATCC 700278 / DSM 12444 / CCUG 56034 / CIP 105152 / NBRC 16084 / F199) protein is Probable transaldolase.